The primary structure comprises 297 residues: Glucuronoxylan 4-O-methyltransferase 3 (297 aa).

Residues 9–29 (LNLKVIFIGSSILILIIIYLA) traverse the membrane as a helical segment. Low complexity predominate over residues 35–47 (SSSSKPISKTNLS). The segment at 35 to 63 (SSSSKPISKTNLSQEEEETQHKQEGCPTT) is disordered.

The protein belongs to the methyltransferase superfamily. As to expression, expressed in hypocotyls, roots, rosette leaves, stems and siliques.

The protein resides in the golgi apparatus membrane. It catalyses the reaction glucuronoxylan D-glucuronate + n S-adenosyl-L-methionine = glucuronoxylan 4-O-methyl-D-glucuronate + n S-adenosyl-L-homocysteine + n H(+). Methyltransferase catalyzing 4-O-methylation of glucuronic acid side chains on xylan. This chain is Glucuronoxylan 4-O-methyltransferase 3 (GXM3), found in Arabidopsis thaliana (Mouse-ear cress).